The chain runs to 768 residues: P-selectin (768 aa).

Residues 1–41 form the signal peptide; the sequence is MAGCPKGSWKPRLRSVVLGAAQLIWLSALISELVNRKKVAT. The Extracellular portion of the chain corresponds to 42–709; that stretch reads WTYNYSTKAY…QAGTLTIQEA (668 aa). Residues Asn45, Asn54, and Asn107 are each glycosylated (N-linked (GlcNAc...) asparagine). Residues 58–158 enclose the C-type lectin domain; sequence AFCKRHFTDL…PCFKRKRALC (101 aa). Intrachain disulfides connect Cys60-Cys158, Cys131-Cys150, Cys168-Cys183, Cys185-Cys194, Cys200-Cys244, Cys230-Cys257, Cys262-Cys306, Cys292-Cys319, Cys324-Cys368, Cys354-Cys381, Cys386-Cys430, Cys416-Cys443, Cys448-Cys492, Cys478-Cys505, Cys510-Cys554, Cys540-Cys567, Cys580-Cys624, Cys610-Cys637, Cys642-Cys686, and Cys672-Cys699. 3 residues coordinate Ca(2+): Glu121, Asn123, and Asn124. Asn123 is a binding site for a carbohydrate. Glu133 and Asn146 together coordinate a carbohydrate. Ca(2+) is bound by residues Asn146 and Asp147. The 37-residue stretch at 159-195 folds into the EGF-like domain; that stretch reads YTASCQDMSCNSQGERIETIGSYTCSCYPGFYGPECE. Sushi domains lie at 198-259, 260-321, 322-383, 384-445, 446-507, 508-569, 578-639, and 640-701; these read QECG…QCKA, VQCQ…TCEA, IACE…VCEA, LQCQ…ECQA, VSCT…MCEA, IKCP…TCKG, VRCP…VCRA, and VKCS…TCQA. Residue Asn212 is glycosylated (N-linked (GlcNAc...) asparagine). The N-linked (GlcNAc...) asparagine glycan is linked to Asn347. Asn456 carries an N-linked (GlcNAc...) asparagine glycan. N-linked (GlcNAc...) asparagine glycosylation is present at Asn603. N-linked (GlcNAc...) asparagine glycans are attached at residues Asn654, Asn661, and Asn679. The chain crosses the membrane as a helical span at residues 710 to 733; sequence LTYLGGALASTSGLAVGGTLLALL. The Cytoplasmic segment spans residues 734 to 768; sequence RKRLRKKDDGKCPLNPHSHLGTYGVFTNAAYDPTP. The S-palmitoyl cysteine; alternate moiety is linked to residue Cys745. Residue Cys745 is the site of S-stearoyl cysteine; alternate attachment. Positions 756-759 match the Endocytosis signal motif; it reads YGVF. The interval 759–768 is interaction with SNX17; it reads FTNAAYDPTP.

The protein belongs to the selectin/LECAM family. As to quaternary structure, interacts with SNX17. Interacts with SELPLG/PSGL1 and PODXL2 and mediates neutrophil adhesion and leukocyte rolling. This interaction requires the sialyl-Lewis X epitope of SELPLG and PODXL2, and specific tyrosine sulfation on SELPLG. Interacts (via C-type lectin domain) with alpha-IIb/beta3 integrin ITGA2B:ITGB3 and alpha-V/beta-3 integrin ITGAV:ITGB3. Interacts with alpha5/beta1 integrin ITGA5:ITGB1 and alpha4/beta1 integrin ITGA4:ITGB. As to expression, not detected in the absence of exposure to lipopolysaccharide (LPS). Detected only after exposure to lipopolysaccharide (LPS) in the tissues examined: spleen, lung, brain, liver, heart, kidney, thymus and small intestine.

It localises to the cell membrane. Its function is as follows. Ca(2+)-dependent receptor for myeloid cells that binds to carbohydrates on neutrophils and monocytes. Mediates the interaction of activated endothelial cells or platelets with leukocytes. The ligand recognized is sialyl-Lewis X. Mediates rapid rolling of leukocyte rolling over vascular surfaces during the initial steps in inflammation through interaction with SELPLG. Mediates cell-cell interactions and cell adhesion via the interaction with integrin alpha-IIb/beta3 (ITGA2B:ITGB3) and integrin alpha-V/beta-3 (ITGAV:ITGB3). The chain is P-selectin (Selp) from Rattus norvegicus (Rat).